The sequence spans 124 residues: Aspartate 1-decarboxylase (124 aa).

The Schiff-base intermediate with substrate; via pyruvic acid role is filled by S25. S25 carries the pyruvic acid (Ser) modification. T57 serves as a coordination point for substrate. Residue Y58 is the Proton donor of the active site. Residue 73-75 (GAA) coordinates substrate.

It belongs to the PanD family. Heterooctamer of four alpha and four beta subunits. The cofactor is pyruvate. In terms of processing, is synthesized initially as an inactive proenzyme, which is activated by self-cleavage at a specific serine bond to produce a beta-subunit with a hydroxyl group at its C-terminus and an alpha-subunit with a pyruvoyl group at its N-terminus.

It is found in the cytoplasm. It catalyses the reaction L-aspartate + H(+) = beta-alanine + CO2. The protein operates within cofactor biosynthesis; (R)-pantothenate biosynthesis; beta-alanine from L-aspartate: step 1/1. Functionally, catalyzes the pyruvoyl-dependent decarboxylation of aspartate to produce beta-alanine. This Clostridium beijerinckii (strain ATCC 51743 / NCIMB 8052) (Clostridium acetobutylicum) protein is Aspartate 1-decarboxylase.